A 260-amino-acid chain; its full sequence is Pyridoxine 5'-phosphate synthase (260 aa).

Residues Asn10 and Arg21 each contribute to the 3-amino-2-oxopropyl phosphate site. The active-site Proton acceptor is the His46. 1-deoxy-D-xylulose 5-phosphate-binding residues include Arg48 and His53. Glu76 functions as the Proton acceptor in the catalytic mechanism. Thr113 is a binding site for 1-deoxy-D-xylulose 5-phosphate. Catalysis depends on His204, which acts as the Proton donor. Residues Asp205 and 227-228 each bind 3-amino-2-oxopropyl phosphate; that span reads GH.

Belongs to the PNP synthase family. As to quaternary structure, homooctamer; tetramer of dimers.

Its subcellular location is the cytoplasm. It catalyses the reaction 3-amino-2-oxopropyl phosphate + 1-deoxy-D-xylulose 5-phosphate = pyridoxine 5'-phosphate + phosphate + 2 H2O + H(+). It participates in cofactor biosynthesis; pyridoxine 5'-phosphate biosynthesis; pyridoxine 5'-phosphate from D-erythrose 4-phosphate: step 5/5. In terms of biological role, catalyzes the complicated ring closure reaction between the two acyclic compounds 1-deoxy-D-xylulose-5-phosphate (DXP) and 3-amino-2-oxopropyl phosphate (1-amino-acetone-3-phosphate or AAP) to form pyridoxine 5'-phosphate (PNP) and inorganic phosphate. This chain is Pyridoxine 5'-phosphate synthase, found in Xylella fastidiosa (strain 9a5c).